The primary structure comprises 728 residues: Methionine--tRNA ligase (728 aa).

A 'HIGH' region motif is present at residues 13 to 23 (PYANGSIHLGH). Zn(2+) contacts are provided by Cys144, Cys147, Cys157, and Cys160. The 'KMSKS' region signature appears at 348–352 (KMSKS). Lys351 serves as a coordination point for ATP. A disordered region spans residues 585-620 (LAPAKSQQVAQAVETMEKNSSTTPAPAKEGEAGQAS). Residues 628 to 728 (DFGKIDLRVA…EGARPGMKVK (101 aa)) enclose the tRNA-binding domain.

This sequence belongs to the class-I aminoacyl-tRNA synthetase family. MetG type 1 subfamily. Homodimer. The cofactor is Zn(2+).

It localises to the cytoplasm. The enzyme catalyses tRNA(Met) + L-methionine + ATP = L-methionyl-tRNA(Met) + AMP + diphosphate. In terms of biological role, is required not only for elongation of protein synthesis but also for the initiation of all mRNA translation through initiator tRNA(fMet) aminoacylation. The chain is Methionine--tRNA ligase from Nitrosospira multiformis (strain ATCC 25196 / NCIMB 11849 / C 71).